A 342-amino-acid chain; its full sequence is UDP-3-O-acylglucosamine N-acyltransferase (342 aa).

Histidine 238 acts as the Proton acceptor in catalysis.

This sequence belongs to the transferase hexapeptide repeat family. LpxD subfamily. In terms of assembly, homotrimer.

It carries out the reaction a UDP-3-O-[(3R)-3-hydroxyacyl]-alpha-D-glucosamine + a (3R)-hydroxyacyl-[ACP] = a UDP-2-N,3-O-bis[(3R)-3-hydroxyacyl]-alpha-D-glucosamine + holo-[ACP] + H(+). It functions in the pathway bacterial outer membrane biogenesis; LPS lipid A biosynthesis. Functionally, catalyzes the N-acylation of UDP-3-O-acylglucosamine using 3-hydroxyacyl-ACP as the acyl donor. Is involved in the biosynthesis of lipid A, a phosphorylated glycolipid that anchors the lipopolysaccharide to the outer membrane of the cell. This is UDP-3-O-acylglucosamine N-acyltransferase from Tolumonas auensis (strain DSM 9187 / NBRC 110442 / TA 4).